The chain runs to 247 residues: tRNA (guanine-N(1)-)-methyltransferase (247 aa).

Residues glycine 113 and 133–138 each bind S-adenosyl-L-methionine; that span reads IGDFVM.

This sequence belongs to the RNA methyltransferase TrmD family. As to quaternary structure, homodimer.

Its subcellular location is the cytoplasm. It catalyses the reaction guanosine(37) in tRNA + S-adenosyl-L-methionine = N(1)-methylguanosine(37) in tRNA + S-adenosyl-L-homocysteine + H(+). Its function is as follows. Specifically methylates guanosine-37 in various tRNAs. The protein is tRNA (guanine-N(1)-)-methyltransferase of Vibrio campbellii (strain ATCC BAA-1116).